A 115-amino-acid chain; its full sequence is NADH-ubiquinone oxidoreductase chain 3 (115 aa).

3 helical membrane passes run I4–L24, F55–L75, and M84–Y104.

It belongs to the complex I subunit 3 family. In terms of assembly, core subunit of respiratory chain NADH dehydrogenase (Complex I) which is composed of 45 different subunits. Interacts with TMEM186. Interacts with TMEM242.

It localises to the mitochondrion inner membrane. The catalysed reaction is a ubiquinone + NADH + 5 H(+)(in) = a ubiquinol + NAD(+) + 4 H(+)(out). Its function is as follows. Core subunit of the mitochondrial membrane respiratory chain NADH dehydrogenase (Complex I) which catalyzes electron transfer from NADH through the respiratory chain, using ubiquinone as an electron acceptor. Essential for the catalytic activity of complex I. The protein is NADH-ubiquinone oxidoreductase chain 3 of Phyllotis darwinii (Darwin's leaf-eared mouse).